The following is a 412-amino-acid chain: Phosphoglycerate kinase (412 aa).

Substrate contacts are provided by residues 26 to 28, Arg42, 65 to 68, Arg133, and Arg166; these read DFN and HLGR. Residues Lys217, Gly308, Glu339, and 368–371 each bind ATP; that span reads GGDS.

Belongs to the phosphoglycerate kinase family. As to quaternary structure, monomer.

It localises to the cytoplasm. It carries out the reaction (2R)-3-phosphoglycerate + ATP = (2R)-3-phospho-glyceroyl phosphate + ADP. The protein operates within carbohydrate degradation; glycolysis; pyruvate from D-glyceraldehyde 3-phosphate: step 2/5. The chain is Phosphoglycerate kinase from Synechococcus sp. (strain JA-2-3B'a(2-13)) (Cyanobacteria bacterium Yellowstone B-Prime).